We begin with the raw amino-acid sequence, 147 residues long: Hemoglobin subunit epsilon (147 aa).

Positions 3–147 (HFTAEEKAAV…VAIALAHKYH (145 aa)) constitute a Globin domain. Phosphoserine occurs at positions 14 and 51. Heme b-binding residues include H64 and H93.

This sequence belongs to the globin family. In terms of assembly, heterotetramer of two alpha chains and two epsilon chains in early embryonic hemoglobin Gower-2; two zeta chains and two epsilon chains in early embryonic hemoglobin Gower-1. In terms of tissue distribution, red blood cells.

In terms of biological role, the epsilon chain is a beta-type chain of early mammalian embryonic hemoglobin. This chain is Hemoglobin subunit epsilon (HBE1), found in Pan troglodytes (Chimpanzee).